Consider the following 364-residue polypeptide: Pectinesterase 1 (364 aa).

An N-terminal signal peptide occupies residues 1–22 (MSCIAVEAVLLGILLYIPIVLS). Residue N103 is glycosylated (N-linked (GlcNAc...) asparagine). Residue D220 is part of the active site.

It belongs to the pectinesterase family. Post-translationally, glycosylated. Expressed in pollen.

The protein resides in the secreted. The enzyme catalyses [(1-&gt;4)-alpha-D-galacturonosyl methyl ester](n) + n H2O = [(1-&gt;4)-alpha-D-galacturonosyl](n) + n methanol + n H(+). Its pathway is glycan metabolism; pectin degradation; 2-dehydro-3-deoxy-D-gluconate from pectin: step 1/5. Functionally, catalyzes the demethylesterification of homogalacturonan components of pectin. May be involved in pollen tube development. This Olea europaea (Common olive) protein is Pectinesterase 1.